Reading from the N-terminus, the 366-residue chain is Chorismate synthase (366 aa).

Residues Arg48 and Arg54 each coordinate NADP(+). Residues 125-127 (RSS), 237-238 (NA), Gly277, 292-296 (KPTSS), and Arg318 each bind FMN.

It belongs to the chorismate synthase family. In terms of assembly, homotetramer. It depends on FMNH2 as a cofactor.

The catalysed reaction is 5-O-(1-carboxyvinyl)-3-phosphoshikimate = chorismate + phosphate. Its pathway is metabolic intermediate biosynthesis; chorismate biosynthesis; chorismate from D-erythrose 4-phosphate and phosphoenolpyruvate: step 7/7. In terms of biological role, catalyzes the anti-1,4-elimination of the C-3 phosphate and the C-6 proR hydrogen from 5-enolpyruvylshikimate-3-phosphate (EPSP) to yield chorismate, which is the branch point compound that serves as the starting substrate for the three terminal pathways of aromatic amino acid biosynthesis. This reaction introduces a second double bond into the aromatic ring system. The chain is Chorismate synthase from Acidovorax ebreus (strain TPSY) (Diaphorobacter sp. (strain TPSY)).